A 407-amino-acid chain; its full sequence is Probable tRNA sulfurtransferase (407 aa).

Residues 61–165 (NEITYRLSKI…LDAIYMYEEV (105 aa)) enclose the THUMP domain. Residues 183 to 184 (ML), 208 to 209 (HF), Arg-265, Gly-287, and Gln-296 contribute to the ATP site.

It belongs to the ThiI family.

It localises to the cytoplasm. It carries out the reaction [ThiI sulfur-carrier protein]-S-sulfanyl-L-cysteine + a uridine in tRNA + 2 reduced [2Fe-2S]-[ferredoxin] + ATP + H(+) = [ThiI sulfur-carrier protein]-L-cysteine + a 4-thiouridine in tRNA + 2 oxidized [2Fe-2S]-[ferredoxin] + AMP + diphosphate. The enzyme catalyses [ThiS sulfur-carrier protein]-C-terminal Gly-Gly-AMP + S-sulfanyl-L-cysteinyl-[cysteine desulfurase] + AH2 = [ThiS sulfur-carrier protein]-C-terminal-Gly-aminoethanethioate + L-cysteinyl-[cysteine desulfurase] + A + AMP + 2 H(+). Its pathway is cofactor biosynthesis; thiamine diphosphate biosynthesis. Functionally, catalyzes the ATP-dependent transfer of a sulfur to tRNA to produce 4-thiouridine in position 8 of tRNAs, which functions as a near-UV photosensor. Also catalyzes the transfer of sulfur to the sulfur carrier protein ThiS, forming ThiS-thiocarboxylate. This is a step in the synthesis of thiazole, in the thiamine biosynthesis pathway. The sulfur is donated as persulfide by IscS. The chain is Probable tRNA sulfurtransferase from Staphylococcus aureus (strain Mu3 / ATCC 700698).